A 141-amino-acid chain; its full sequence is Hemoglobin subunit alpha-3 (141 aa).

Residues 1–141 (VLSPADKTNV…VSTVLTSKYR (141 aa)) enclose the Globin domain. H58 contributes to the O2 binding site. H87 serves as a coordination point for heme b.

This sequence belongs to the globin family. Heterotetramer of two alpha chains and two beta chains. As to expression, red blood cells.

In terms of biological role, involved in oxygen transport from the lung to the various peripheral tissues. The chain is Hemoglobin subunit alpha-3 from Pan troglodytes (Chimpanzee).